The sequence spans 190 residues: DNA dC-&gt;dU-editing enzyme APOBEC-3C (190 aa).

The region spanning 29 to 138 (DRNETWLCFT…PCYQEGLRSL (110 aa)) is the CMP/dCMP-type deaminase domain. The tract at residues 40–86 (EGIKRRSVVSWKTGVFRNQVDSETHCHAERCFLSWFCDDILSPNTKY) is (Microbial infection) Required for interaction with human foamy virus protein Bet. Zn(2+) is bound at residue histidine 66. Catalysis depends on glutamate 68, which acts as the Proton donor. Positions 97 and 100 each coordinate Zn(2+).

Belongs to the cytidine and deoxycytidylate deaminase family. As to quaternary structure, homodimer. Interacts with TRIB3. Interacts with AGO2. In terms of assembly, (Microbial infection) Interacts with human foamy virus protein Bet; this interaction does not induce APOBEC3C degradation but prevents its dimerization and incorporation into the virion by binding of Bet close to or within the APOBEC3C dimerization site. (Microbial infection) Interacts with HIV-1 Vif. Zn(2+) serves as cofactor. As to expression, expressed in spleen, testes, peripherical blood lymphocytes, heart, thymus, prostate and ovary.

The protein resides in the nucleus. It is found in the cytoplasm. The enzyme catalyses a 2'-deoxycytidine in single-stranded DNA + H2O + H(+) = a 2'-deoxyuridine in single-stranded DNA + NH4(+). (Microbial infection) Antiviral activity is neutralized by the HIV-1 virion infectivity factor (Vif), that prevents its incorporation into progeny HIV-1 virions by both inhibiting its translation and/or by inducing its ubiquitination and subsequent degradation by the 26S proteasome. Its function is as follows. DNA deaminase (cytidine deaminase) which acts as an inhibitor of retrovirus replication and retrotransposon mobility via deaminase-dependent and -independent mechanisms. After the penetration of retroviral nucleocapsids into target cells of infection and the initiation of reverse transcription, it can induce the conversion of cytosine to uracil in the minus-sense single-strand viral DNA, leading to G-to-A hypermutations in the subsequent plus-strand viral DNA. The resultant detrimental levels of mutations in the proviral genome, along with a deamination-independent mechanism that works prior to the proviral integration, together exert efficient antiretroviral effects in infected target cells. Selectively targets single-stranded DNA and does not deaminate double-stranded DNA or single- or double-stranded RNA. Exhibits antiviral activity against simian immunodeficiency virus (SIV), hepatitis B virus (HBV), herpes simplex virus 1 (HHV-1) and Epstein-Barr virus (EBV) and may inhibit the mobility of LTR and non-LTR retrotransposons. May also play a role in the epigenetic regulation of gene expression through the process of active DNA demethylation. This is DNA dC-&gt;dU-editing enzyme APOBEC-3C (APOBEC3C) from Homo sapiens (Human).